A 348-amino-acid chain; its full sequence is Peptidyl-Lys metalloendopeptidase (348 aa).

The signal sequence occupies residues 1 to 18 (MFSSVMVALVSLAVAVSA). Positions 19–181 (NPGLSLKVSG…RATPTLTRPV (163 aa)) are excised as a propeptide. Disulfide bonds link C186–C256 and C258–C278. The O-linked (Man) threonine; partial glycan is linked to T223. H298 lines the Zn(2+) pocket. E299 is a catalytic residue. 2 residues coordinate Zn(2+): H302 and D311.

Requires Zn(2+) as cofactor.

It localises to the secreted. The enzyme catalyses Preferential cleavage in proteins: -Xaa-|-Lys- (in which Xaa may be Pro).. With respect to regulation, inhibited by chelating agents such as EDTA and 1,10-phenanthroline. This chain is Peptidyl-Lys metalloendopeptidase (MEP), found in Grifola frondosa (Maitake).